The chain runs to 175 residues: uncharacterized protein (175 aa).

The Macro domain occupies 1–173 (MYKNIIKLIS…VYKEKYKKLL (173 aa)).

It belongs to the MacroD-type family.

This is an uncharacterized protein from Fusobacterium nucleatum subsp. nucleatum (strain ATCC 25586 / DSM 15643 / BCRC 10681 / CIP 101130 / JCM 8532 / KCTC 2640 / LMG 13131 / VPI 4355).